A 359-amino-acid polypeptide reads, in one-letter code: Glutamate 5-kinase (359 aa).

Residue Lys-7 coordinates ATP. Substrate-binding residues include Ser-47, Asp-135, and Asn-147. Residue 202-208 (SGGITSK) coordinates ATP. The PUA domain maps to 266–343 (KGSIFINEGA…DQLEDVLGYS (78 aa)).

It belongs to the glutamate 5-kinase family.

The protein resides in the cytoplasm. It carries out the reaction L-glutamate + ATP = L-glutamyl 5-phosphate + ADP. The protein operates within amino-acid biosynthesis; L-proline biosynthesis; L-glutamate 5-semialdehyde from L-glutamate: step 1/2. In terms of biological role, catalyzes the transfer of a phosphate group to glutamate to form L-glutamate 5-phosphate. In Kosmotoga olearia (strain ATCC BAA-1733 / DSM 21960 / TBF 19.5.1), this protein is Glutamate 5-kinase.